A 536-amino-acid chain; its full sequence is Lysosomal acid glucosylceramidase (536 aa).

A signal peptide spans 1-39 (MELSSPSREEYPMPRGRVGIMAASLMGLLLLHTVSWVSG). 2 disulfides stabilise this stretch: Cys-43–Cys-55 and Cys-57–Cys-62. 4 N-linked (GlcNAc...) asparagine glycosylation sites follow: Asn-58, Asn-98, Asn-185, and Asn-208. Glu-274 functions as the Proton donor in the catalytic mechanism. A glycan (N-linked (GlcNAc...) asparagine) is linked at Asn-309. Glu-379 (nucleophile) is an active-site residue. An N-linked (GlcNAc...) asparagine glycan is attached at Asn-501.

It belongs to the glycosyl hydrolase 30 family. Interacts with saposin-C. Interacts with SCARB2. Interacts with TCP1. Interacts with GRN; this interaction prevents aggregation of GBA1-SCARB2 complex via interaction with HSPA1A upon stress.

The protein localises to the lysosome membrane. It carries out the reaction a beta-D-glucosyl-(1&lt;-&gt;1')-N-acylsphing-4-enine + H2O = an N-acylsphing-4-enine + D-glucose. The enzyme catalyses a beta-D-galactosyl-(1&lt;-&gt;1')-N-acylsphing-4-enine + H2O = an N-acylsphing-4-enine + D-galactose. It catalyses the reaction cholesteryl 3-beta-D-glucoside + H2O = cholesterol + D-glucose. The catalysed reaction is a beta-D-glucosyl-(1&lt;-&gt;1')-N-acylsphing-4-enine + cholesterol = cholesteryl 3-beta-D-glucoside + an N-acylsphing-4-enine. It carries out the reaction beta-D-glucosyl-N-(9Z-octadecenoyl)-sphing-4E-enine + cholesterol = N-(9Z-octadecenoyl)-sphing-4-enine + cholesteryl 3-beta-D-glucoside. The enzyme catalyses beta-D-glucosyl-N-octanoylsphing-4E-enine + cholesterol = N-octanoylsphing-4-enine + cholesteryl 3-beta-D-glucoside. It catalyses the reaction beta-D-glucosyl-N-dodecanoylsphing-4-enine + cholesterol = N-dodecanoylsphing-4-enine + cholesteryl 3-beta-D-glucoside. The catalysed reaction is beta-D-glucosyl-(1&lt;-&gt;1)-N-octadecanoylsphing-4-enine + cholesterol = N-octadecanoylsphing-4-enine + cholesteryl 3-beta-D-glucoside. It carries out the reaction beta-D-glucosyl-(1&lt;-&gt;1')-N-(15Z-tetracosenoyl)-sphing-4-enine + cholesterol = N-(15Z-tetracosenoyl)-sphing-4-enine + cholesteryl 3-beta-D-glucoside. The enzyme catalyses a beta-D-galactosyl-(1&lt;-&gt;1')-N-acylsphing-4-enine + cholesterol = cholesteryl 3-beta-D-galactoside + an N-acylsphing-4-enine. It catalyses the reaction 1-(beta-D-galactosyl)-N-dodecanoylsphing-4-enine + cholesterol = cholesteryl 3-beta-D-galactoside + N-dodecanoylsphing-4-enine. The catalysed reaction is a beta-D-xylosyl-(1&lt;-&gt;1')-N-acylsphing-4-enine + cholesterol = cholesteryl 3-beta-D-xyloside + an N-acylsphing-4-enine. It carries out the reaction beta-D-xylosyl-(1&lt;-&gt;1')-N-(9Z-octadecenoyl)-sphing-4-enine + cholesterol = cholesteryl 3-beta-D-xyloside + N-(9Z-octadecenoyl)-sphing-4-enine. The protein operates within steroid metabolism; cholesterol metabolism. Its pathway is sphingolipid metabolism. Its function is as follows. Glucosylceramidase that catalyzes, within the lysosomal compartment, the hydrolysis of glucosylceramides/GlcCers (such as beta-D-glucosyl-(1&lt;-&gt;1')-N-acylsphing-4-enine) into free ceramides (such as N-acylsphing-4-enine) and glucose. Plays a central role in the degradation of complex lipids and the turnover of cellular membranes. Through the production of ceramides, participates in the PKC-activated salvage pathway of ceramide formation. Catalyzes the glucosylation of cholesterol, through a transglucosylation reaction where glucose is transferred from GlcCer to cholesterol. GlcCer containing mono-unsaturated fatty acids (such as beta-D-glucosyl-N-(9Z-octadecenoyl)-sphing-4-enine) are preferred as glucose donors for cholesterol glucosylation when compared with GlcCer containing same chain length of saturated fatty acids (such as beta-D-glucosyl-N-octadecanoyl-sphing-4-enine). Under specific conditions, may alternatively catalyze the reverse reaction, transferring glucose from cholesteryl 3-beta-D-glucoside to ceramide. Can also hydrolyze cholesteryl 3-beta-D-glucoside producing glucose and cholesterol. Catalyzes the hydrolysis of galactosylceramides/GalCers (such as beta-D-galactosyl-(1&lt;-&gt;1')-N-acylsphing-4-enine), as well as the transfer of galactose between GalCers and cholesterol in vitro, but with lower activity than with GlcCers. Contrary to GlcCer and GalCer, xylosylceramide/XylCer (such as beta-D-xyosyl-(1&lt;-&gt;1')-N-acylsphing-4-enine) is not a good substrate for hydrolysis, however it is a good xylose donor for transxylosylation activity to form cholesteryl 3-beta-D-xyloside. The protein is Lysosomal acid glucosylceramidase (GBA1) of Bos taurus (Bovine).